The sequence spans 87 residues: Small ribosomal subunit protein uS15 (87 aa).

The protein belongs to the universal ribosomal protein uS15 family. Part of the 30S ribosomal subunit. Forms a bridge to the 50S subunit in the 70S ribosome, contacting the 23S rRNA.

In terms of biological role, one of the primary rRNA binding proteins, it binds directly to 16S rRNA where it helps nucleate assembly of the platform of the 30S subunit by binding and bridging several RNA helices of the 16S rRNA. Its function is as follows. Forms an intersubunit bridge (bridge B4) with the 23S rRNA of the 50S subunit in the ribosome. This is Small ribosomal subunit protein uS15 from Ruminiclostridium cellulolyticum (strain ATCC 35319 / DSM 5812 / JCM 6584 / H10) (Clostridium cellulolyticum).